Reading from the N-terminus, the 298-residue chain is Nucleotide-binding protein GK3066 (298 aa).

Position 17–24 (17–24 (GMSGAGKT)) interacts with ATP. 68-71 (DLRS) lines the GTP pocket.

It belongs to the RapZ-like family.

Functionally, displays ATPase and GTPase activities. This Geobacillus kaustophilus (strain HTA426) protein is Nucleotide-binding protein GK3066.